A 692-amino-acid chain; its full sequence is Elongation factor G (692 aa).

A tr-type G domain is found at Glu8–Thr282. Residues Ala17–Thr24, Asp81–His85, and Asn135–Asp138 contribute to the GTP site.

The protein belongs to the TRAFAC class translation factor GTPase superfamily. Classic translation factor GTPase family. EF-G/EF-2 subfamily.

It is found in the cytoplasm. In terms of biological role, catalyzes the GTP-dependent ribosomal translocation step during translation elongation. During this step, the ribosome changes from the pre-translocational (PRE) to the post-translocational (POST) state as the newly formed A-site-bound peptidyl-tRNA and P-site-bound deacylated tRNA move to the P and E sites, respectively. Catalyzes the coordinated movement of the two tRNA molecules, the mRNA and conformational changes in the ribosome. The protein is Elongation factor G of Bacillus licheniformis (strain ATCC 14580 / DSM 13 / JCM 2505 / CCUG 7422 / NBRC 12200 / NCIMB 9375 / NCTC 10341 / NRRL NRS-1264 / Gibson 46).